We begin with the raw amino-acid sequence, 310 residues long: Taste receptor type 2 member 125 (310 aa).

At 1–2 (MG) the chain is on the extracellular side. Residues 3 to 23 (IVIGIICAFIIIVQFIIGNVA) form a helical membrane-spanning segment. Topologically, residues 24–46 (NGFIALVNIIDWVKRRKISLVDQ) are cytoplasmic. Residues 47–67 (IITALAISRIDMLCSTFLIVL) form a helical membrane-spanning segment. Residues 68 to 87 (ITSLYPDLNTAVNMVKISNN) lie on the Extracellular side of the membrane. Residues 88–108 (IWIVANHFSIWLATSLSIFYF) form a helical membrane-spanning segment. Over 109-128 (LKIANFSNYVFLCLRWRLSK) the chain is Cytoplasmic. The chain crosses the membrane as a helical span at residues 129 to 149 (VVSVTLLLSLVLLLMNILIMN). Over 150–185 (MHIDTWSDGFKRNVSFGFRSKNCTRFFKLALLINTT) the chain is Extracellular. Asn-162, Asn-171, and Asn-183 each carry an N-linked (GlcNAc...) asparagine glycan. The chain crosses the membrane as a helical span at residues 186–206 (FTCVPFTVSMVAFLLLIFSLW). Over 207 to 232 (RHLKNMQYHAKGSRDPSTAVHIKALQ) the chain is Cytoplasmic. Residues 233 to 253 (MVVVFVLFYTFFFLSLAIQLW) form a helical membrane-spanning segment. The Extracellular portion of the chain corresponds to 254–261 (TSESLEKN). The chain crosses the membrane as a helical span at residues 262 to 282 (NLFYVTLIITFPSVHSCMLIL). Topologically, residues 283-310 (RNSKLRQASLLVLWWLLCRSKDIQTLVP) are cytoplasmic.

This sequence belongs to the G-protein coupled receptor T2R family.

The protein resides in the membrane. Putative taste receptor which may play a role in the perception of bitterness. The polypeptide is Taste receptor type 2 member 125 (Rattus norvegicus (Rat)).